Reading from the N-terminus, the 279-residue chain is Probable endonuclease 4 (279 aa).

H67, H107, E144, D177, H180, H214, D227, H229, and E259 together coordinate Zn(2+).

It belongs to the AP endonuclease 2 family. Zn(2+) is required as a cofactor.

It catalyses the reaction Endonucleolytic cleavage to 5'-phosphooligonucleotide end-products.. Functionally, endonuclease IV plays a role in DNA repair. It cleaves phosphodiester bonds at apurinic or apyrimidinic (AP) sites, generating a 3'-hydroxyl group and a 5'-terminal sugar phosphate. This Sulfurihydrogenibium sp. (strain YO3AOP1) protein is Probable endonuclease 4.